The chain runs to 92 residues: Small ribosomal subunit protein uS19 (92 aa).

The protein belongs to the universal ribosomal protein uS19 family.

Its function is as follows. Protein S19 forms a complex with S13 that binds strongly to the 16S ribosomal RNA. The chain is Small ribosomal subunit protein uS19 from Parvibaculum lavamentivorans (strain DS-1 / DSM 13023 / NCIMB 13966).